The primary structure comprises 395 residues: Flagellin B (395 aa).

It belongs to the bacterial flagellin family.

The protein localises to the secreted. It is found in the bacterial flagellum. Its function is as follows. Flagellin is the subunit protein which polymerizes to form the filaments of bacterial flagella. The sequence is that of Flagellin B (flaB) from Rhizobium meliloti (Ensifer meliloti).